We begin with the raw amino-acid sequence, 277 residues long: Ribosomal RNA small subunit methyltransferase A (277 aa).

S-adenosyl-L-methionine is bound by residues N27, L29, G54, E75, D95, and N118.

The protein belongs to the class I-like SAM-binding methyltransferase superfamily. rRNA adenine N(6)-methyltransferase family. RsmA subfamily.

The protein resides in the cytoplasm. It carries out the reaction adenosine(1518)/adenosine(1519) in 16S rRNA + 4 S-adenosyl-L-methionine = N(6)-dimethyladenosine(1518)/N(6)-dimethyladenosine(1519) in 16S rRNA + 4 S-adenosyl-L-homocysteine + 4 H(+). In terms of biological role, specifically dimethylates two adjacent adenosines (A1518 and A1519) in the loop of a conserved hairpin near the 3'-end of 16S rRNA in the 30S particle. May play a critical role in biogenesis of 30S subunits. The polypeptide is Ribosomal RNA small subunit methyltransferase A (Chlamydia trachomatis serovar L2 (strain ATCC VR-902B / DSM 19102 / 434/Bu)).